A 483-amino-acid chain; its full sequence is 6-phosphogluconate dehydrogenase, decarboxylating (483 aa).

Residues 10 to 15 (GLAVMG) and 33 to 35 (NRT) each bind NADP(+). Lys-38 bears the N6-acetyllysine mark. Ser-57 carries the phosphoserine modification. Lys-59 carries the N6-acetyllysine modification. NADP(+)-binding positions include 75–77 (VKA) and Asn-103. Substrate contacts are provided by residues Asn-103 and 129–131 (SGG). Phosphoserine is present on Ser-129. The Proton acceptor role is filled by Lys-184. Substrate is bound at residue 187 to 188 (HN). Glu-191 (proton donor) is an active-site residue. Residues Tyr-192, Lys-261, Arg-288, Arg-447, and His-453 each coordinate substrate. 478–481 (SSSY) contacts NADP(+).

This sequence belongs to the 6-phosphogluconate dehydrogenase family. As to quaternary structure, homodimer.

It is found in the cytoplasm. The catalysed reaction is 6-phospho-D-gluconate + NADP(+) = D-ribulose 5-phosphate + CO2 + NADPH. The protein operates within carbohydrate degradation; pentose phosphate pathway; D-ribulose 5-phosphate from D-glucose 6-phosphate (oxidative stage): step 3/3. Catalyzes the oxidative decarboxylation of 6-phosphogluconate to ribulose 5-phosphate and CO(2), with concomitant reduction of NADP to NADPH. In Mus musculus (Mouse), this protein is 6-phosphogluconate dehydrogenase, decarboxylating (Pgd).